The sequence spans 303 residues: Quinolinate synthase (303 aa).

Positions 24 and 41 each coordinate iminosuccinate. C86 serves as a coordination point for [4Fe-4S] cluster. Residues 112 to 114 (YIN) and S129 each bind iminosuccinate. C172 is a binding site for [4Fe-4S] cluster. Iminosuccinate is bound by residues 198 to 200 (HPE) and T215. [4Fe-4S] cluster is bound at residue C260.

The protein belongs to the quinolinate synthase family. Type 2 subfamily. The cofactor is [4Fe-4S] cluster.

The protein localises to the cytoplasm. The enzyme catalyses iminosuccinate + dihydroxyacetone phosphate = quinolinate + phosphate + 2 H2O + H(+). The protein operates within cofactor biosynthesis; NAD(+) biosynthesis; quinolinate from iminoaspartate: step 1/1. Functionally, catalyzes the condensation of iminoaspartate with dihydroxyacetone phosphate to form quinolinate. This chain is Quinolinate synthase, found in Caldicellulosiruptor bescii (strain ATCC BAA-1888 / DSM 6725 / KCTC 15123 / Z-1320) (Anaerocellum thermophilum).